Consider the following 209-residue polypeptide: Yop proteins translocation protein K (209 aa).

In terms of biological role, belongs to an operon involved in the translocation of Yop proteins across the bacterial membranes or in the specific control of this function. The sequence is that of Yop proteins translocation protein K (yscK) from Yersinia pseudotuberculosis serotype I (strain IP32953).